The following is a 466-amino-acid chain: MNQGKIVQIIGAIVDVEFPRNNVPKVYNALKIDGTAIILEVQQQLGDGIVRTIALGSTDGLKRNLIATDTGHAITVPVGTGTLGRIMDVLGNPIDEAGPITYTDQWEIHRNAPSYEDQASTTELLETGIKVIDLMCPFAKGGKVGLFGGAGVGKTVNMMELINNIAKAHSGLSVFAGVGERTREGNDFYHEMKDSNVLDKVAMVYGQMNEPPGNRLRVALTGLTIAEYFRDEKDSSGKGKDVLLFIDNIYRYTLAGTEVSALLGRMPSAVGYQPTLAEEMGVLQERITSTANGSITSIQAVYVPADDLTDPSPATTFGHLDSTVTLSRSIAALGIYPAVDPLDSSSRQMDPLIIGEEHYNTTQRVQQTLQKYKDLKDIIAILGMDELSEDDKLAVSRARKIERFFSQPFHVAEVFTGAPGKYVPLKETIRGFKAIVDGEYDHLPEQAFYMVGNIEEVIEKANKMTA.

Position 148–155 (148–155 (GGAGVGKT)) interacts with ATP.

This sequence belongs to the ATPase alpha/beta chains family. F-type ATPases have 2 components, CF(1) - the catalytic core - and CF(0) - the membrane proton channel. CF(1) has five subunits: alpha(3), beta(3), gamma(1), delta(1), epsilon(1). CF(0) has three main subunits: a(1), b(2) and c(9-12). The alpha and beta chains form an alternating ring which encloses part of the gamma chain. CF(1) is attached to CF(0) by a central stalk formed by the gamma and epsilon chains, while a peripheral stalk is formed by the delta and b chains.

The protein localises to the cell inner membrane. The enzyme catalyses ATP + H2O + 4 H(+)(in) = ADP + phosphate + 5 H(+)(out). Its function is as follows. Produces ATP from ADP in the presence of a proton gradient across the membrane. The catalytic sites are hosted primarily by the beta subunits. This is ATP synthase subunit beta from Xylella fastidiosa (strain M12).